Consider the following 199-residue polypeptide: Auxin-responsive protein IAA1 (199 aa).

An EAR-like (transcriptional repression) motif is present at residues 25-29 (LTLRL). The tract at residues 31 to 74 (GSLAAAAAPDPDRKRSSPSSSDAADAADNSSPLAAAADAPPAPK) is disordered. The segment covering 47–69 (SPSSSDAADAADNSSPLAAAADA) has biased composition (low complexity). In terms of domain architecture, PB1 spans 93–187 (AKFVKVAVDG…TCQRLRLMKS (95 aa)).

Belongs to the Aux/IAA family. As to quaternary structure, homodimers and heterodimers. As to expression, highly expressed in flowers. Expressed at low levels in roots and shoots.

Its subcellular location is the nucleus. In terms of biological role, aux/IAA proteins are short-lived transcriptional factors that function as repressors of early auxin response genes at low auxin concentrations. This Oryza sativa subsp. japonica (Rice) protein is Auxin-responsive protein IAA1 (IAA1).